Here is a 364-residue protein sequence, read N- to C-terminus: DNA replication and repair protein RecF (364 aa).

30-37 (GNNAQGKT) provides a ligand contact to ATP.

This sequence belongs to the RecF family.

The protein resides in the cytoplasm. The RecF protein is involved in DNA metabolism; it is required for DNA replication and normal SOS inducibility. RecF binds preferentially to single-stranded, linear DNA. It also seems to bind ATP. The polypeptide is DNA replication and repair protein RecF (Streptococcus uberis (strain ATCC BAA-854 / 0140J)).